We begin with the raw amino-acid sequence, 704 residues long: MARTTPIARYRNIGISAHIDAGKTTTTERILFYTGVNHKIGEVHDGAATMDWMEQEQERGITITSAATTAFWSGMAKQYEPHRINIIDTPGHVDFTIEVERSMRVLDGAVMVYCAVGGVQPQSETVWRQANKYKVPRIAFVNKMDRMGANFLKVVGQIKTRLGANPVPLQLAIGAEEGFTGVVDLVKMKAINWNDADQGVTFEYEDIPADMQDLANEWHQNLIESAAEASEELMEKYLGGEELTEEEIKQALRQRVLNNEIILVTCGSAFKNKGVQAMLDAVIDYLPSPVDVPAINGILDDGKDTPAERHASDDEPFSALAFKIATDPFVGNLTFFRVYSGVVNSGDTVLNSVKTARERFGRIVQMHANKREEIKEVRAGDIAAAIGLKDVTTGDTLCDPENPIILERMEFPEPVISIAVEPKTKADQEKMGLALGRLAKEDPSFRVWTDEESNQTIIAGMGELHLDIIVDRMKREFNVEANVGKPQVAYREAIRAKVTDIEGKHAKQSGGRGQYGHVVIDMYPLEPGSNPKGYEFINDIKGGVIPGEYIPAVDKGIQEQLKSGPLAGYPVVDLGVRLHFGSYHDVDSSELAFKLAASIAFKEGFKKAKPVLLEPIMKVEVETPEENTGDVIGDLSRRRGMLKGQESEVTGVKIHAEVPLSEMFGYATQLRSLTKGRASYTMEFLKYDDAPNNVAQAVIEARGK.

The tr-type G domain occupies 8–290; that stretch reads ARYRNIGISA…AVIDYLPSPV (283 aa). GTP-binding positions include 17-24, 88-92, and 142-145; these read AHIDAGKT, DTPGH, and NKMD.

Belongs to the TRAFAC class translation factor GTPase superfamily. Classic translation factor GTPase family. EF-G/EF-2 subfamily.

Its subcellular location is the cytoplasm. In terms of biological role, catalyzes the GTP-dependent ribosomal translocation step during translation elongation. During this step, the ribosome changes from the pre-translocational (PRE) to the post-translocational (POST) state as the newly formed A-site-bound peptidyl-tRNA and P-site-bound deacylated tRNA move to the P and E sites, respectively. Catalyzes the coordinated movement of the two tRNA molecules, the mRNA and conformational changes in the ribosome. This is Elongation factor G from Salmonella agona (strain SL483).